A 425-amino-acid polypeptide reads, in one-letter code: Metalloprotease AF_0655 (425 aa).

The protein belongs to the peptidase U62 family.

Probable metalloprotease. This chain is Metalloprotease AF_0655, found in Archaeoglobus fulgidus (strain ATCC 49558 / DSM 4304 / JCM 9628 / NBRC 100126 / VC-16).